Here is a 450-residue protein sequence, read N- to C-terminus: Glucose-6-phosphate isomerase (450 aa).

The active-site Proton donor is glutamate 291. Residues histidine 312 and lysine 426 contribute to the active site.

It belongs to the GPI family.

The protein localises to the cytoplasm. The enzyme catalyses alpha-D-glucose 6-phosphate = beta-D-fructose 6-phosphate. Its pathway is carbohydrate biosynthesis; gluconeogenesis. It functions in the pathway carbohydrate degradation; glycolysis; D-glyceraldehyde 3-phosphate and glycerone phosphate from D-glucose: step 2/4. Functionally, catalyzes the reversible isomerization of glucose-6-phosphate to fructose-6-phosphate. The protein is Glucose-6-phosphate isomerase of Clostridium perfringens (strain ATCC 13124 / DSM 756 / JCM 1290 / NCIMB 6125 / NCTC 8237 / Type A).